The chain runs to 706 residues: Termination factor NPH-I homolog (706 aa).

The Helicase ATP-binding domain occupies 62–227 (IGQGENTRGL…VPCFNMLSGR (166 aa)). Residue 75-82 (HQMGMGKT) coordinates ATP. The short motif at 168 to 171 (DEAH) is the DEAH box element. A Helicase C-terminal domain is found at 417–599 (QCLQPLKVLE…HLNSAFRDLL (183 aa)).

It belongs to the DEAD box helicase family. DEAH subfamily. In terms of assembly, part of the viral DNA-directed RNA polymerase that consists of 8 polII-like subunits (RPB1, RPB2, RPB3, RPB5, RPB6, RPB7, RPB9, RPB10), a capping enzyme and a termination factor.

The protein resides in the virion. In terms of biological role, putative DNA-dependent ATPase required for providing the needed energy to achieve the termination of early transcripts. The chain is Termination factor NPH-I homolog from Ornithodoros (relapsing fever ticks).